A 293-amino-acid polypeptide reads, in one-letter code: Energy-coupling factor transporter ATP-binding protein EcfA2 (293 aa).

The ABC transporter domain maps to 3 to 246 (ITFQKVEHRY…ADELEKIGVD (244 aa)). 40–47 (GHTGSGKS) is a binding site for ATP.

It belongs to the ABC transporter superfamily. Energy-coupling factor EcfA family. In terms of assembly, forms a stable energy-coupling factor (ECF) transporter complex composed of 2 membrane-embedded substrate-binding proteins (S component), 2 ATP-binding proteins (A component) and 2 transmembrane proteins (T component).

The protein resides in the cell membrane. Its function is as follows. ATP-binding (A) component of a common energy-coupling factor (ECF) ABC-transporter complex. Unlike classic ABC transporters this ECF transporter provides the energy necessary to transport a number of different substrates. This is Energy-coupling factor transporter ATP-binding protein EcfA2 from Bacillus anthracis.